The sequence spans 521 residues: MVRARRTKRDSVTNIYRTCKQAGNCPPDVVNKVEQTTIADQILKFGSTGVFFGGLGIGTGRGTGGSTGYVPIGEGPAIRVGGTPSVVRPGILPEAIGPADIIPIDTVNPIDPNASSVVPLTDTGPDLLPGTIETIAEVNPAPDIPRVDTSVVTTSRGSSAVLEVASEPTPPTRTRISRTQYHNPSFQILTESTPSLGESALTDHVVVTSGSGGQPIGGVTPVEIELQELPSRYTFEIEEPTPPRRSSTPLRNITQAVGNLRRSLYNRRLTQQVNVQDPLFLQQPSRLVRFAFDNPVFEEEVTQIFERDVAAVEEPPDRDFLDIAKLSRPLYSETPQGYVRVSRLGNRASIRTRSGATVGAQVHFYTDLSTIDAEESIELSLLGEHSGDATIVQGPVESSFVDLNVQELPQVIEVDPEPTFHSDDLLLDEQNEDFSGSQLVYGSGRRSTTFTVPRFSTPRSDTFYVQDLEGYAVSYPERRNYPEIIYPQPDLPTVIIHTADTSGDFYLHPSLRRRKRKRTYL.

The Nuclear localization signal motif lies at M1–D10. An intrachain disulfide couples C19 to C25. A Nuclear localization signal motif is present at residues R513–Y520.

It belongs to the papillomaviridae L2 protein family. Interacts with major capsid protein L1. Interacts with E2; this interaction inhibits E2 transcriptional activity but not the DNA replication function E2. Interacts with host GADD45GIP1. Interacts with host HSPA8; this interaction is required for L2 nuclear translocation. Interacts with host importins KPNB2 and KPNB3. Forms a complex with importin alpha2-beta1 heterodimers via interaction with the importin alpha2 adapter. Interacts with host DYNLT1; this interaction is essential for virus intracellular transport during entry. Interacts (via C-terminus) with host retromer subunits VPS35 and VPS29. Highly phosphorylated.

Its subcellular location is the virion. It localises to the host nucleus. The protein localises to the host early endosome. It is found in the host Golgi apparatus. Functionally, minor protein of the capsid that localizes along the inner surface of the virion, within the central cavities beneath the L1 pentamers. Plays a role in capsid stabilization through interaction with the major capsid protein L1. Once the virion enters the host cell, L2 escorts the genomic DNA into the nucleus by promoting escape from the endosomal compartments and traffic through the host Golgi network. Mechanistically, the C-terminus of L2 possesses a cell-penetrating peptide that protudes from the host endosome, interacts with host cytoplasmic retromer cargo and thereby mediates the capsid delivery to the host trans-Golgi network. Plays a role through its interaction with host dynein in the intracellular microtubule-dependent transport of viral capsid toward the nucleus. Mediates the viral genome import into the nucleus through binding to host importins. Once within the nucleus, L2 localizes viral genomes to host PML bodies in order to activate early gene expression for establishment of infection. Later on, promotes late gene expression by interacting with the viral E2 protein and by inhibiting its transcriptional activation functions. During virion assembly, encapsidates the genome by direct interaction with the viral DNA. This Human papillomavirus type 49 protein is Minor capsid protein L2.